We begin with the raw amino-acid sequence, 424 residues long: Arogenate dehydratase 4, chloroplastic (424 aa).

A chloroplast-targeting transit peptide spans 1–34; the sequence is MQAATSCDLKFRSTDPTSRNKCFSHAIPKRVAVT. Residues 126-303 enclose the Prephenate dehydratase domain; it reads RVAYQGVPGA…NVTRFLMLAR (178 aa). The ACT domain occupies 319–410; that stretch reads VFAAQEHKGT…SFLRVLGSYP (92 aa).

As to expression, expressed in roots, leaves, stems, flowers and siliques. More abundant in stems and roots.

Its subcellular location is the plastid. The protein localises to the chloroplast stroma. It catalyses the reaction L-arogenate + H(+) = L-phenylalanine + CO2 + H2O. Its pathway is amino-acid biosynthesis; L-phenylalanine biosynthesis; L-phenylalanine from L-arogenate: step 1/1. Its function is as follows. Converts the prephenate produced from the shikimate-chorismate pathway into phenylalanine. The chain is Arogenate dehydratase 4, chloroplastic from Arabidopsis thaliana (Mouse-ear cress).